We begin with the raw amino-acid sequence, 443 residues long: Thymidine phosphorylase (443 aa).

This sequence belongs to the thymidine/pyrimidine-nucleoside phosphorylase family. Homodimer.

The catalysed reaction is thymidine + phosphate = 2-deoxy-alpha-D-ribose 1-phosphate + thymine. It functions in the pathway pyrimidine metabolism; dTMP biosynthesis via salvage pathway; dTMP from thymine: step 1/2. The enzymes which catalyze the reversible phosphorolysis of pyrimidine nucleosides are involved in the degradation of these compounds and in their utilization as carbon and energy sources, or in the rescue of pyrimidine bases for nucleotide synthesis. In Shewanella sediminis (strain HAW-EB3), this protein is Thymidine phosphorylase.